The chain runs to 147 residues: D-aminoacyl-tRNA deacylase (147 aa).

A Gly-cisPro motif, important for rejection of L-amino acids motif is present at residues 136-137; it reads GP.

This sequence belongs to the DTD family. Homodimer.

It localises to the cytoplasm. It carries out the reaction glycyl-tRNA(Ala) + H2O = tRNA(Ala) + glycine + H(+). The enzyme catalyses a D-aminoacyl-tRNA + H2O = a tRNA + a D-alpha-amino acid + H(+). In terms of biological role, an aminoacyl-tRNA editing enzyme that deacylates mischarged D-aminoacyl-tRNAs. Also deacylates mischarged glycyl-tRNA(Ala), protecting cells against glycine mischarging by AlaRS. Acts via tRNA-based rather than protein-based catalysis; rejects L-amino acids rather than detecting D-amino acids in the active site. By recycling D-aminoacyl-tRNA to D-amino acids and free tRNA molecules, this enzyme counteracts the toxicity associated with the formation of D-aminoacyl-tRNA entities in vivo and helps enforce protein L-homochirality. This Streptococcus dysgalactiae subsp. equisimilis (Streptococcus equisimilis) protein is D-aminoacyl-tRNA deacylase.